Here is a 207-residue protein sequence, read N- to C-terminus: Thiamine-phosphate synthase (207 aa).

Residues Gln38–Lys42 and Asn70 each bind 4-amino-2-methyl-5-(diphosphooxymethyl)pyrimidine. Residues Asp71 and Asp90 each contribute to the Mg(2+) site. Thr109 provides a ligand contact to 4-amino-2-methyl-5-(diphosphooxymethyl)pyrimidine. Thr135 to Ser137 contacts 2-[(2R,5Z)-2-carboxy-4-methylthiazol-5(2H)-ylidene]ethyl phosphate. A 4-amino-2-methyl-5-(diphosphooxymethyl)pyrimidine-binding site is contributed by Lys138. 2-[(2R,5Z)-2-carboxy-4-methylthiazol-5(2H)-ylidene]ethyl phosphate is bound by residues Gly165 and Ile185–Ser186.

The protein belongs to the thiamine-phosphate synthase family. Mg(2+) is required as a cofactor.

It carries out the reaction 2-[(2R,5Z)-2-carboxy-4-methylthiazol-5(2H)-ylidene]ethyl phosphate + 4-amino-2-methyl-5-(diphosphooxymethyl)pyrimidine + 2 H(+) = thiamine phosphate + CO2 + diphosphate. The enzyme catalyses 2-(2-carboxy-4-methylthiazol-5-yl)ethyl phosphate + 4-amino-2-methyl-5-(diphosphooxymethyl)pyrimidine + 2 H(+) = thiamine phosphate + CO2 + diphosphate. The catalysed reaction is 4-methyl-5-(2-phosphooxyethyl)-thiazole + 4-amino-2-methyl-5-(diphosphooxymethyl)pyrimidine + H(+) = thiamine phosphate + diphosphate. Its pathway is cofactor biosynthesis; thiamine diphosphate biosynthesis; thiamine phosphate from 4-amino-2-methyl-5-diphosphomethylpyrimidine and 4-methyl-5-(2-phosphoethyl)-thiazole: step 1/1. Its function is as follows. Condenses 4-methyl-5-(beta-hydroxyethyl)thiazole monophosphate (THZ-P) and 2-methyl-4-amino-5-hydroxymethyl pyrimidine pyrophosphate (HMP-PP) to form thiamine monophosphate (TMP). This chain is Thiamine-phosphate synthase, found in Clostridium perfringens (strain SM101 / Type A).